The primary structure comprises 361 residues: Peptide chain release factor 1 (361 aa).

The residue at position 236 (Gln-236) is an N5-methylglutamine.

It belongs to the prokaryotic/mitochondrial release factor family. Methylated by PrmC. Methylation increases the termination efficiency of RF1.

It is found in the cytoplasm. Functionally, peptide chain release factor 1 directs the termination of translation in response to the peptide chain termination codons UAG and UAA. In Lactobacillus delbrueckii subsp. bulgaricus (strain ATCC BAA-365 / Lb-18), this protein is Peptide chain release factor 1.